The chain runs to 324 residues: Glyoxylate/hydroxypyruvate reductase B (324 aa).

Residues arginine 237 and glutamate 266 contribute to the active site. Catalysis depends on histidine 285, which acts as the Proton donor.

The protein belongs to the D-isomer specific 2-hydroxyacid dehydrogenase family. GhrB subfamily. As to quaternary structure, homodimer.

It localises to the cytoplasm. It catalyses the reaction glycolate + NADP(+) = glyoxylate + NADPH + H(+). It carries out the reaction (R)-glycerate + NAD(+) = 3-hydroxypyruvate + NADH + H(+). The enzyme catalyses (R)-glycerate + NADP(+) = 3-hydroxypyruvate + NADPH + H(+). Its function is as follows. Catalyzes the NADPH-dependent reduction of glyoxylate and hydroxypyruvate into glycolate and glycerate, respectively. The polypeptide is Glyoxylate/hydroxypyruvate reductase B (Shigella flexneri serotype 5b (strain 8401)).